Consider the following 703-residue polypeptide: Polyribonucleotide nucleotidyltransferase (703 aa).

2 residues coordinate Mg(2+): Asp485 and Asp491. Residues 552 to 611 (PRAYTINIDTDKIRTLIGTGGKTINKIIEETGVKIDIREDGTVFVLSSDADSANRALKMI) form the KH domain. One can recognise an S1 motif domain in the interval 621–689 (GEVYLGKVTK…NQGRVNLSRK (69 aa)).

The protein belongs to the polyribonucleotide nucleotidyltransferase family. Requires Mg(2+) as cofactor.

It is found in the cytoplasm. The catalysed reaction is RNA(n+1) + phosphate = RNA(n) + a ribonucleoside 5'-diphosphate. In terms of biological role, involved in mRNA degradation. Catalyzes the phosphorolysis of single-stranded polyribonucleotides processively in the 3'- to 5'-direction. The protein is Polyribonucleotide nucleotidyltransferase of Clostridium acetobutylicum (strain ATCC 824 / DSM 792 / JCM 1419 / IAM 19013 / LMG 5710 / NBRC 13948 / NRRL B-527 / VKM B-1787 / 2291 / W).